The primary structure comprises 307 residues: GMP synthase [glutamine-hydrolyzing] subunit B (307 aa).

The region spanning 1-184 is the GMPS ATP-PPase domain; sequence MWENFIEEKV…LGLPEKIYNR (184 aa). ATP is bound at residue 27 to 33; sequence SGGVDSS.

As to quaternary structure, heterodimer composed of a glutamine amidotransferase subunit (A) and a GMP-binding subunit (B).

It catalyses the reaction XMP + L-glutamine + ATP + H2O = GMP + L-glutamate + AMP + diphosphate + 2 H(+). It functions in the pathway purine metabolism; GMP biosynthesis; GMP from XMP (L-Gln route): step 1/1. Its function is as follows. Catalyzes the synthesis of GMP from XMP. This Thermococcus kodakarensis (strain ATCC BAA-918 / JCM 12380 / KOD1) (Pyrococcus kodakaraensis (strain KOD1)) protein is GMP synthase [glutamine-hydrolyzing] subunit B.